Here is a 65-residue protein sequence, read N- to C-terminus: Ferredoxin-1 (65 aa).

One can recognise a 4Fe-4S ferredoxin-type domain in the interval 3 to 31 (RKFYVDQDECIACESCVEIAPGAFAMDPE). The [4Fe-4S] cluster site is built by Cys-12, Cys-15, Cys-18, and Cys-55.

In terms of assembly, homodimer. It depends on [4Fe-4S] cluster as a cofactor.

Functionally, ferredoxins are iron-sulfur proteins that transfer electrons in a wide variety of metabolic reactions. The polypeptide is Ferredoxin-1 (fd1) (Desulfocurvibacter africanus (Desulfovibrio africanus)).